Here is an 83-residue protein sequence, read N- to C-terminus: NAD(P)H-quinone oxidoreductase subunit L, organellar chromatophore (83 aa).

2 consecutive transmembrane segments (helical) span residues 17-37 (LLLAYGVLGGLYLILVPLALY) and 53-73 (LFVYGLVFLFFPGLILLSPFL).

This sequence belongs to the complex I NdhL subunit family. NDH-1 can be composed of about 15 different subunits; different subcomplexes with different compositions have been identified which probably have different functions.

It localises to the plastid. The protein localises to the organellar chromatophore thylakoid membrane. It carries out the reaction a plastoquinone + NADH + (n+1) H(+)(in) = a plastoquinol + NAD(+) + n H(+)(out). The enzyme catalyses a plastoquinone + NADPH + (n+1) H(+)(in) = a plastoquinol + NADP(+) + n H(+)(out). NDH-1 shuttles electrons from an unknown electron donor, via FMN and iron-sulfur (Fe-S) centers, to quinones in the respiratory and/or the photosynthetic chain. The immediate electron acceptor for the enzyme in this species is believed to be plastoquinone. Couples the redox reaction to proton translocation, and thus conserves the redox energy in a proton gradient. This Paulinella chromatophora protein is NAD(P)H-quinone oxidoreductase subunit L, organellar chromatophore.